The chain runs to 500 residues: MAESQLNCLDEAHVNEKVTEAQAAFYYCERRRAALEALLGGGEQAYRERLKEEQLRDFLSSPERQALRAAWSPYEDAVPAANARGKSKAKAKAPAPAPAESGESLAYWPDRSDTEVPPLDLGWTDTGFYRGVSRVTLFTHPPKDEKAPHLKQVVRQMIQQAQKVIAVVMDLFTDGDIFQDIVDAACKRRVPVYIILDEAGVKYFLEMCQDLQLTDFRIRNIRVRSVTGVGFYMPMGRIKGTLSSRFLMVDGDKVATGSYRFTWSSSHVDRNLLLLLTGQNVEPFDTEFRELYAISEEVDLYRQLSLAGRVGLHYSSTVARKLINPKYALVSGCRHPPGEMMRWAARQQREAGGNPEGQEEGASGGESAWRLESFLKDLVTVEQVLPPVEPIPLGELSQKDGRMVSHMHRDLKPKSREAPSRNGMGEAARGEAAPARRFSSRLFSRRAKRPAAPNGMASSVSTETSEVEFLTGKRPNENSSADISGKTSPSSAKPSNCVIS.

An N-acetylalanine modification is found at A2. Residues 2-300 are DUF1669; it reads AESQLNCLDE…LYAISEEVDL (299 aa). S4 bears the Phosphoserine mark. Disordered regions lie at residues 82–109, 347–366, and 391–500; these read NARGKSKAKAKAPAPAPAESGESLAYWP, QQREAGGNPEGQEEGASGGE, and IPLG…CVIS. The segment covering 397 to 419 has biased composition (basic and acidic residues); the sequence is SQKDGRMVSHMHRDLKPKSREAP. Composition is skewed to low complexity over residues 425–442 and 458–468; these read GEAARGEAAPARRFSSRL and SSVSTETSEVE. The segment covering 477-500 has biased composition (polar residues); sequence ENSSADISGKTSPSSAKPSNCVIS. Phosphoserine is present on S479.

The protein belongs to the FAM83 family. As to quaternary structure, directly interacts (via DUF1669) with CSNK1A1 and CSNK1A1L.

Its subcellular location is the cell membrane. The chain is Protein FAM83F (FAM83F) from Homo sapiens (Human).